Consider the following 228-residue polypeptide: Octanoyltransferase (228 aa).

Residues 31-212 (GETDGILILL…KFSEVFGIHF (182 aa)) form the BPL/LPL catalytic domain. Substrate contacts are provided by residues 76-83 (RGGKITFH), 143-145 (AIG), and 156-158 (GIA). The Acyl-thioester intermediate role is filled by Cys-174.

It belongs to the LipB family.

The protein localises to the cytoplasm. It carries out the reaction octanoyl-[ACP] + L-lysyl-[protein] = N(6)-octanoyl-L-lysyl-[protein] + holo-[ACP] + H(+). It functions in the pathway protein modification; protein lipoylation via endogenous pathway; protein N(6)-(lipoyl)lysine from octanoyl-[acyl-carrier-protein]: step 1/2. Its function is as follows. Catalyzes the transfer of endogenously produced octanoic acid from octanoyl-acyl-carrier-protein onto the lipoyl domains of lipoate-dependent enzymes. Lipoyl-ACP can also act as a substrate although octanoyl-ACP is likely to be the physiological substrate. This chain is Octanoyltransferase, found in Thermoanaerobacter sp. (strain X514).